Consider the following 123-residue polypeptide: Large ribosomal subunit protein bL12 (123 aa).

This sequence belongs to the bacterial ribosomal protein bL12 family. Homodimer. Part of the ribosomal stalk of the 50S ribosomal subunit. Forms a multimeric L10(L12)X complex, where L10 forms an elongated spine to which 2 to 4 L12 dimers bind in a sequential fashion. Binds GTP-bound translation factors.

Its function is as follows. Forms part of the ribosomal stalk which helps the ribosome interact with GTP-bound translation factors. Is thus essential for accurate translation. This is Large ribosomal subunit protein bL12 from Chromobacterium violaceum (strain ATCC 12472 / DSM 30191 / JCM 1249 / CCUG 213 / NBRC 12614 / NCIMB 9131 / NCTC 9757 / MK).